The chain runs to 182 residues: Large ribosomal subunit protein bL25 (182 aa).

This sequence belongs to the bacterial ribosomal protein bL25 family. CTC subfamily. In terms of assembly, part of the 50S ribosomal subunit; part of the 5S rRNA/L5/L18/L25 subcomplex. Contacts the 5S rRNA. Binds to the 5S rRNA independently of L5 and L18.

Its function is as follows. This is one of the proteins that binds to the 5S RNA in the ribosome where it forms part of the central protuberance. The polypeptide is Large ribosomal subunit protein bL25 (Borrelia hermsii (strain HS1 / DAH)).